A 247-amino-acid polypeptide reads, in one-letter code: 3-deoxy-manno-octulosonate cytidylyltransferase (247 aa).

This sequence belongs to the KdsB family.

It is found in the cytoplasm. It carries out the reaction 3-deoxy-alpha-D-manno-oct-2-ulosonate + CTP = CMP-3-deoxy-beta-D-manno-octulosonate + diphosphate. The protein operates within nucleotide-sugar biosynthesis; CMP-3-deoxy-D-manno-octulosonate biosynthesis; CMP-3-deoxy-D-manno-octulosonate from 3-deoxy-D-manno-octulosonate and CTP: step 1/1. It functions in the pathway bacterial outer membrane biogenesis; lipopolysaccharide biosynthesis. Activates KDO (a required 8-carbon sugar) for incorporation into bacterial lipopolysaccharide in Gram-negative bacteria. The polypeptide is 3-deoxy-manno-octulosonate cytidylyltransferase (Pelodictyon phaeoclathratiforme (strain DSM 5477 / BU-1)).